We begin with the raw amino-acid sequence, 244 residues long: tRNA pseudouridine synthase A (244 aa).

The active-site Nucleophile is the D52. Y110 serves as a coordination point for substrate.

It belongs to the tRNA pseudouridine synthase TruA family. In terms of assembly, homodimer.

It catalyses the reaction uridine(38/39/40) in tRNA = pseudouridine(38/39/40) in tRNA. Its function is as follows. Formation of pseudouridine at positions 38, 39 and 40 in the anticodon stem and loop of transfer RNAs. The sequence is that of tRNA pseudouridine synthase A from Geobacter sulfurreducens (strain ATCC 51573 / DSM 12127 / PCA).